Reading from the N-terminus, the 880-residue chain is Xylosyltransferase oxt (880 aa).

At 1-14 (MEQSVSARWLRRYR) the chain is on the cytoplasmic side. The helical; Signal-anchor for type II membrane protein transmembrane segment at 15-35 (PVLIILVLIFGIQLFLAYKSV) threads the bilayer. Residues 36-880 (DIGGGSGSGL…PKSDVDALLK (845 aa)) lie on the Lumenal side of the membrane. 4 disulfides stabilise this stretch: Cys-87–Cys-115, Cys-131–Cys-469, Cys-488–Cys-501, and Cys-490–Cys-499. Residues Asn-135 and Asn-139 are each glycosylated (N-linked (GlcNAc...) asparagine). Residues 138–232 (ANVSLGCYRD…FYAMNIYETG (95 aa)) form the WSC domain. Residues Asp-287 and 316–318 (TIW) contribute to the UDP-alpha-D-xylose site. N-linked (GlcNAc...) asparagine glycosylation occurs at Asn-346. UDP-alpha-D-xylose is bound at residue 419–420 (DW). UDP-alpha-D-xylose-binding positions include Ser-502 and 526 to 527 (RK). N-linked (GlcNAc...) asparagine glycans are attached at residues Asn-700 and Asn-729. A disulfide bond links Cys-846 and Cys-859.

It belongs to the glycosyltransferase 14 family. XylT subfamily. It depends on Ca(2+) as a cofactor. Mn(2+) is required as a cofactor. Mg(2+) serves as cofactor.

The protein localises to the endoplasmic reticulum membrane. The protein resides in the golgi apparatus membrane. The enzyme catalyses UDP-alpha-D-xylose + L-seryl-[protein] = 3-O-(beta-D-xylosyl)-L-seryl-[protein] + UDP + H(+). Its pathway is glycan metabolism; chondroitin sulfate biosynthesis. The protein operates within glycan metabolism; heparan sulfate biosynthesis. In terms of biological role, catalyzes the first step in biosynthesis of glycosaminoglycan. Transfers D-xylose from UDP-D-xylose to specific serine residues of the core protein. The sequence is that of Xylosyltransferase oxt from Drosophila pseudoobscura pseudoobscura (Fruit fly).